Consider the following 63-residue polypeptide: Beta-defensin 38 (63 aa).

The first 21 residues, 1–21, serve as a signal peptide directing secretion; that stretch reads MKISCFLLLVLSLYLFQVNQA. 3 disulfide bridges follow: Cys-29/Cys-58, Cys-36/Cys-51, and Cys-41/Cys-59.

This sequence belongs to the beta-defensin family.

It is found in the secreted. Its function is as follows. Has antibacterial activity. The chain is Beta-defensin 38 (Defb38) from Rattus norvegicus (Rat).